The chain runs to 360 residues: MLVWLAEHLVQFYSGFNVFSYLTFRAIVSLLTALFLSLWMGPRLIAWLQKLQIAQVVRNDGPESHFSKRGTPTMGGLMILTSITISVLMWAYPSNPYVWCVLFVLVGYGIVGFIDDYRKVVRKDTKGLIVRWKYFWQSVIALAVAFTMFAVGKDTPATQLAVPFFKDIMPQLGLWYVLLAYFVIVGTSNAVNLTDGLDGLAIMPTVFVAAGLALVAWATGNMNFAGYLHIPYVRFAGELVVVCTAIVGAGLGFLWFNTYPAQVFMGDVGSLALGGALGTIAVLLRQEFLLLIMGGVFVVETLSVILQVGSFKLRGQRIFRMAPIHHHYELKGWPEPRVIVRFWIISLMLVLIGLATLKVR.

Transmembrane regions (helical) follow at residues 27–47, 72–92, 94–114, 132–152, 168–188, 199–219, 235–255, 263–283, 288–308, and 338–358; these read IVSL…LIAW, PTMG…MWAY, SNPY…VGFI, WKYF…FAVG, IMPQ…VGTS, GLAI…AWAT, FAGE…GFLW, VFMG…IAVL, FLLL…ILQV, and VIVR…ATLK.

The protein belongs to the glycosyltransferase 4 family. MraY subfamily. The cofactor is Mg(2+).

Its subcellular location is the cell inner membrane. It carries out the reaction UDP-N-acetyl-alpha-D-muramoyl-L-alanyl-gamma-D-glutamyl-meso-2,6-diaminopimeloyl-D-alanyl-D-alanine + di-trans,octa-cis-undecaprenyl phosphate = di-trans,octa-cis-undecaprenyl diphospho-N-acetyl-alpha-D-muramoyl-L-alanyl-D-glutamyl-meso-2,6-diaminopimeloyl-D-alanyl-D-alanine + UMP. Its pathway is cell wall biogenesis; peptidoglycan biosynthesis. In terms of biological role, catalyzes the initial step of the lipid cycle reactions in the biosynthesis of the cell wall peptidoglycan: transfers peptidoglycan precursor phospho-MurNAc-pentapeptide from UDP-MurNAc-pentapeptide onto the lipid carrier undecaprenyl phosphate, yielding undecaprenyl-pyrophosphoryl-MurNAc-pentapeptide, known as lipid I. This Sodalis glossinidius (strain morsitans) protein is Phospho-N-acetylmuramoyl-pentapeptide-transferase.